The sequence spans 180 residues: ADP ribosylation factor 4 (180 aa).

Glycine 2 carries the N-myristoyl glycine lipid modification. GTP-binding positions include 24–31 (GLDAAGKT), 67–71 (DVGGQ), and 126–129 (NKQD).

Belongs to the small GTPase superfamily. Arf family. In terms of tissue distribution, uniformly distributed throughout adults.

It is found in the golgi apparatus. In terms of biological role, GTP-binding protein involved in protein trafficking; may modulate vesicle budding and uncoating within the Golgi apparatus. The chain is ADP ribosylation factor 4 from Drosophila melanogaster (Fruit fly).